The following is an 843-amino-acid chain: Probable inorganic carbon transporter subunit DabA 2 (843 aa).

C352, D354, H536, and C551 together coordinate Zn(2+).

Belongs to the inorganic carbon transporter (TC 9.A.2) DabA family. As to quaternary structure, forms a complex with DabB. The cofactor is Zn(2+).

It is found in the cell inner membrane. Functionally, part of an energy-coupled inorganic carbon pump. This chain is Probable inorganic carbon transporter subunit DabA 2, found in Bradyrhizobium sp. (strain BTAi1 / ATCC BAA-1182).